We begin with the raw amino-acid sequence, 546 residues long: Glutathione reductase (546 aa).

The transit peptide at 2–46 (YKHRYFHFFFFFFFFLVSTKIIRSFTFLNNNTNLSNPVYFKKKAN) directs the protein to the apicoplast. Ser-58 and Gly-59 together coordinate FAD. Ser-58 lines the glutathione pocket. Arg-65 serves as a coordination point for glutathione. FAD-binding residues include Glu-78, Thr-85, Cys-86, and Lys-94. A disulfide bond links Cys-86 and Cys-91. A glutathione-binding site is contributed by Tyr-141. Ala-157 contacts FAD. Ile-233, Glu-236, Arg-253, Arg-259, and Gly-318 together coordinate NADP(+). FAD contacts are provided by Asp-358 and Thr-400. Arg-408 is a glutathione binding site. An NADP(+)-binding site is contributed by Val-430. Residue His-531 coordinates FAD. The Proton acceptor role is filled by His-531.

The protein belongs to the class-I pyridine nucleotide-disulfide oxidoreductase family. Homodimer. Requires FAD as cofactor.

The protein localises to the cytoplasm. The protein resides in the plastid. It localises to the apicoplast. It carries out the reaction 2 glutathione + NADP(+) = glutathione disulfide + NADPH + H(+). Functionally, catalyzes the reduction of glutathione disulfide (GSSG) to reduced glutathione (GSH). Constitutes the major mechanism to maintain a high GSH:GSSG ratio in the cytosol. The chain is Glutathione reductase from Plasmodium falciparum (isolate 3D7).